A 421-amino-acid polypeptide reads, in one-letter code: Histidine--tRNA ligase (421 aa).

It belongs to the class-II aminoacyl-tRNA synthetase family. In terms of assembly, homodimer.

It localises to the cytoplasm. The enzyme catalyses tRNA(His) + L-histidine + ATP = L-histidyl-tRNA(His) + AMP + diphosphate + H(+). The chain is Histidine--tRNA ligase from Coxiella burnetii (strain Dugway 5J108-111).